A 573-amino-acid chain; its full sequence is Probable D-xylulose kinase A (573 aa).

Substrate is bound by residues His97, Arg168, Asp284, and Asn285. ATP-binding positions include Trp366, 471–472 (GG), and Asn475.

Belongs to the FGGY kinase family.

It localises to the cytoplasm. It catalyses the reaction D-xylulose + ATP = D-xylulose 5-phosphate + ADP + H(+). In terms of biological role, highly specific D-xylulose kinase which participates in the catabolism of xylose. Xylose is a major component of hemicelluloses such as xylan. Most fungi utilize D-xylose via three enzymatic reactions, xylose reductase (XR), xylitol dehydrogenase (XDH), and xylulokinase, to form xylulose 5-phosphate, which enters pentose phosphate pathway. In Aspergillus clavatus (strain ATCC 1007 / CBS 513.65 / DSM 816 / NCTC 3887 / NRRL 1 / QM 1276 / 107), this protein is Probable D-xylulose kinase A (xkiA).